A 179-amino-acid polypeptide reads, in one-letter code: Protein Syd (179 aa).

The protein belongs to the Syd family.

The protein resides in the cell inner membrane. Functionally, interacts with the SecY protein in vivo. May bind preferentially to an uncomplexed state of SecY, thus functioning either as a chelating agent for excess SecY in the cell or as a regulatory factor that negatively controls the translocase function. This chain is Protein Syd, found in Pseudoalteromonas translucida (strain TAC 125).